The sequence spans 179 residues: Protein TIFY 11a (179 aa).

The Tify domain maps to 62-97 (VDGGGQQFTIFYAGKVVVIDRCTPAMAAELMRFASA). The Jas motif lies at 115–140 (PIARKASLKRFLAKRKATPASARSSY). Positions 117–124 (ARKASLKR) match the Nuclear localization signal motif.

It belongs to the TIFY/JAZ family. As to quaternary structure, interacts with BHLH148. Interacts with COI1A in a coronatine-dependent manner. Interacts with COI1B in a coronatine-dependent manner. Coronatine is an analog of jasmonoyl isoleucine (JA-Ile). Interacts with RSS3. Forms a ternary complex with RSS3 and BHLH094 in the nucleus. Interacts with BHLH062 and NINJA1. Interacts with MYB30. In terms of processing, ubiquitinated. Targeted for degradation by the SCF(COI1) E3 ubiquitin ligase-proteasome pathway during jasmonate signaling.

It localises to the nucleus. In terms of biological role, repressor of jasmonate (JA) responses. Forms a ternary complex with RSS3 and BHLH94 to negatively regulate JA-responsive genes. Acts as a positive regulator of tolerance to salt stress. Involved in salt tolerance by modulating potassium homeostasis through JA signaling and regulation of the expression of potassium ion transporter genes. Acts as a transcriptional regulator targeted by the SCF(COI1) E3 ubiquitin ligase complexes in the JA signaling pathway, and interacts with BHLH062 that may directly regulate the ion transporter genes. Acts as a positive regulator of tolerance to dehydration stress. Acts as a negative regulator of tolerance to cold stress by interacting with MYB30. This Oryza sativa subsp. japonica (Rice) protein is Protein TIFY 11a.